Consider the following 265-residue polypeptide: Eukaryotic translation initiation factor 3 subunit J (265 aa).

Positions 24–34 are enriched in acidic residues; that stretch reads AGDEPILDSWD. Residues 24–74 are disordered; it reads AGDEPILDSWDEEPKAKKEAAKPKPKPKAGGKKNAKGEEKKEQVLAIDELD. A compositionally biased stretch (basic and acidic residues) spans 35–45; the sequence is EEPKAKKEAAK. Basic residues predominate over residues 46–57; the sequence is PKPKPKAGGKKN. Coiled-coil stretches lie at residues 78-106 and 190-220; these read RKEL…MAEE and IENI…ARVK.

The protein belongs to the eIF-3 subunit J family. As to quaternary structure, component of the eukaryotic translation initiation factor 3 (eIF-3) complex.

It is found in the cytoplasm. In terms of biological role, component of the eukaryotic translation initiation factor 3 (eIF-3) complex, which is involved in protein synthesis of a specialized repertoire of mRNAs and, together with other initiation factors, stimulates binding of mRNA and methionyl-tRNAi to the 40S ribosome. The eIF-3 complex specifically targets and initiates translation of a subset of mRNAs involved in cell proliferation. The chain is Eukaryotic translation initiation factor 3 subunit J from Candida glabrata (strain ATCC 2001 / BCRC 20586 / JCM 3761 / NBRC 0622 / NRRL Y-65 / CBS 138) (Yeast).